The sequence spans 461 residues: Probable metabolite transport protein CsbC (461 aa).

Residues 1–14 (MKKDTRKYMIYFFG) lie on the Cytoplasmic side of the membrane. Residues 15-35 (ALGGLLYGYDTGVISGALLFI) form a helical membrane-spanning segment. At 36-38 (NND) the chain is on the extracellular side. A helical transmembrane segment spans residues 39-59 (IPLTTLTEGLVVSMLLLGAIF). The Cytoplasmic segment spans residues 60–76 (GSALSGTCSDRWGRRKV). A helical transmembrane segment spans residues 77–97 (VFVLSIIFIIGALACAFSQTI). Over 98-104 (GMLIASR) the chain is Extracellular. The helical transmembrane segment at 105-125 (VILGLAVGGSTALVPVYLSEM) threads the bilayer. Residues 126–139 (APTKIRGTLGTMNN) are Cytoplasmic-facing. A helical membrane pass occupies residues 140–160 (LMIVTGILLAYIVNYLFTPFE). Over 161–163 (AWR) the chain is Extracellular. Residues 164-184 (WMVGLAAVPAVLLLIGIAFMP) form a helical membrane-spanning segment. Topologically, residues 185–241 (ESPRWLVKRGSEEEARRIMNITHDPKDIEMELAEMKQGEAEKKETTLGVLKAKWIRP) are cytoplasmic. A helical transmembrane segment spans residues 242–262 (MLLIGVGLAIFQQAVGINTVI). At 263-280 (YYAPTIFTKAGLGTSASA) the chain is on the extracellular side. A helical transmembrane segment spans residues 281-301 (LGTMGIGILNVIMCITAMILI). The Cytoplasmic segment spans residues 302–308 (DRVGRKK). Residues 309-329 (LLIWGSVGITLSLAALSGVLL) traverse the membrane as a helical segment. Over 330-341 (TLGLSASTAWMT) the chain is Extracellular. The helical transmembrane segment at 342-362 (VVFLGVYIVFYQATWGPVVWV) threads the bilayer. Topologically, residues 363–378 (LMPELFPSKARGAATG) are cytoplasmic. A helical membrane pass occupies residues 379–399 (FTTLVLSAANLIVSLVFPLML). Residues 400–402 (SAM) are Extracellular-facing. A helical membrane pass occupies residues 403-423 (GIAWVFMVFSVICLLSFFFAF). Residues 424 to 461 (YMVPETKGKSLEEIEASLKKRFKKKKSTQNQVLNERTL) are Cytoplasmic-facing.

The protein belongs to the major facilitator superfamily. Sugar transporter (TC 2.A.1.1) family.

The protein localises to the cell membrane. In terms of biological role, could serve either a nutritional or an osmotic protection function. This is Probable metabolite transport protein CsbC (csbC) from Bacillus subtilis (strain 168).